A 460-amino-acid polypeptide reads, in one-letter code: ATP synthase subunit beta 1 (460 aa).

149-156 provides a ligand contact to ATP; it reads GGAGVGKT.

It belongs to the ATPase alpha/beta chains family. As to quaternary structure, F-type ATPases have 2 components, CF(1) - the catalytic core - and CF(0) - the membrane proton channel. CF(1) has five subunits: alpha(3), beta(3), gamma(1), delta(1), epsilon(1). CF(0) has three main subunits: a(1), b(2) and c(9-12). The alpha and beta chains form an alternating ring which encloses part of the gamma chain. CF(1) is attached to CF(0) by a central stalk formed by the gamma and epsilon chains, while a peripheral stalk is formed by the delta and b chains.

It is found in the cell inner membrane. The catalysed reaction is ATP + H2O + 4 H(+)(in) = ADP + phosphate + 5 H(+)(out). Its function is as follows. Produces ATP from ADP in the presence of a proton gradient across the membrane. The catalytic sites are hosted primarily by the beta subunits. The polypeptide is ATP synthase subunit beta 1 (Nitrosomonas eutropha (strain DSM 101675 / C91 / Nm57)).